The primary structure comprises 181 residues: Mitochondrial inner membrane protein Mpv17 (181 aa).

A run of 4 helical transmembrane segments spans residues 20–37, 51–67, 86–103, and 152–169; these read MCIA…AQYL, FSFL…FIWF, LCID…AILF, and VILN…LSYI.

It belongs to the peroxisomal membrane protein PXMP2/4 family.

Its subcellular location is the mitochondrion inner membrane. Its function is as follows. Involved in mitochondria homeostasis. The protein is Mitochondrial inner membrane protein Mpv17 of Caenorhabditis elegans.